Here is an 829-residue protein sequence, read N- to C-terminus: Periplasmic nitrate reductase (829 aa).

The tat-type signal signal peptide spans 1–30 (MKLSRRDFMKANAVAAAAAVAGVSAPTLAA). Positions 41-97 (IKWDKAPCRFCGTGCSVLVGSQDGRVVATQGDPDAPVNRGLNCIKGYFLSKIMYGED) constitute a 4Fe-4S Mo/W bis-MGD-type domain. Cys-48, Cys-51, Cys-55, and Cys-83 together coordinate [4Fe-4S] cluster. Residues Lys-85, Gln-152, Asn-177, Cys-181, 214-221 (WGSNMAEM), 245-249 (STFEH), 264-266 (QTD), Met-374, Gln-378, Asn-484, 510-511 (SD), Lys-533, Asp-560, and 719-728 (TGRVLEHWHT) each bind Mo-bis(molybdopterin guanine dinucleotide). Phe-795 is a substrate binding site. Positions 803 and 820 each coordinate Mo-bis(molybdopterin guanine dinucleotide).

Belongs to the prokaryotic molybdopterin-containing oxidoreductase family. NasA/NapA/NarB subfamily. Component of the periplasmic nitrate reductase NapAB complex composed of NapA and NapB. [4Fe-4S] cluster serves as cofactor. The cofactor is Mo-bis(molybdopterin guanine dinucleotide). Predicted to be exported by the Tat system. The position of the signal peptide cleavage has not been experimentally proven.

It is found in the periplasm. The enzyme catalyses 2 Fe(II)-[cytochrome] + nitrate + 2 H(+) = 2 Fe(III)-[cytochrome] + nitrite + H2O. Functionally, catalytic subunit of the periplasmic nitrate reductase complex NapAB. Receives electrons from NapB and catalyzes the reduction of nitrate to nitrite. The polypeptide is Periplasmic nitrate reductase (Aeromonas salmonicida (strain A449)).